Here is a 348-residue protein sequence, read N- to C-terminus: Aminotransferase atnJ (348 aa).

Arginine 79 provides a ligand contact to pyridoxal 5'-phosphate. Lysine 180 carries the N6-(pyridoxal phosphate)lysine modification. Residue glutamate 216 coordinates pyridoxal 5'-phosphate.

This sequence belongs to the class-IV pyridoxal-phosphate-dependent aminotransferase family. Pyridoxal 5'-phosphate is required as a cofactor.

Its pathway is secondary metabolite biosynthesis. Its function is as follows. Aminotransferase; part of the gene cluster that mediates the biosynthesis of aspercryptins, linear lipopeptides built from six amino acids including 2 highly unusual and nonproteogenic amino acids, 2-amino-octanoic acid (2aoa) and 2-amino-dodecanol (2adol). The core structure of aspercryptins is as follows: Ser/Ala-Thr-Ile/Val-2aoa-Asn-2adol. The first step of aspercryptin biosynthesis is the generation of the fatty acid precursors, octanoic and dodecanoic acids, by the FAS subunits atnF and atnM. The fatty acid precursors are likely transformed into the corresponding alpha-amino fatty acids in three steps. First, they are hydroxylated by the cytochrome P450 monooxygenase atnE, then oxidized to the corresponding alpha-keto acids by the NAD(P)-dependent oxidoreductase atnD, and finally converted to the alpha-amino fatty acids by the PLP-dependent aminotransferases atnH or atnJ. the alpha-amino fatty acids, 2-amino-octanoic and 2-amino-dodecanoic acids, are recognized, activated, and covalently tethered to the NRPS atnA by its fourth and sixth adenylation domains. The second module of atnA is the Thr module and contains an epimerase (E) domain responsible for the epimerization of Thr to D-allo-Thr. Additionally, despite atnA having only one epimerase domain, the first amino acid of aspercryptin A1 is D-Ser, suggesting that serine is either loaded directly as D-Ser on the first module or that the epimerase domain in the threonine module epimerizes both L-Ser and L-Thr. After condensation of the hexapeptide of aspercryptin, the C-terminal reductase (TE) domain might be involved in the reductive release and production of the aldehyde hexapeptide. Further reduction would generate aspercryptins. The variety of aspercryptins produced reflects the flexibility of the atnA NRPS, allowing incorporation of alanine instead of serine, valine for isoleucine, and a C10 fatty amino alcohol instead of the C12 version. AtnB seems to be involved in the selectivity for Ile versus Val by the third module. Moreover, type B, C and D aspercryptins have an additional N-terminal cichorine, acetyl and propionyl group respectively. In Emericella nidulans (strain FGSC A4 / ATCC 38163 / CBS 112.46 / NRRL 194 / M139) (Aspergillus nidulans), this protein is Aminotransferase atnJ.